A 162-amino-acid chain; its full sequence is Caveolin-2 (162 aa).

Topologically, residues 1–86 (MGLETEKADV…FEISKYVMYK (86 aa)) are cytoplasmic. At Tyr19 the chain carries Phosphotyrosine; by SRC. Ser20 is modified (phosphoserine). Tyr27 is subject to Phosphotyrosine; by SRC. Position 36 is a phosphoserine (Ser36). Positions 87–107 (FLTVFLAIPLAFAAGILFATL) form an intramembrane region, helical. Residues 108-162 (SCLHIWIIMPFVKTCLMVLPSVQTIWKSVTDVIIAPLCTSVGRSLSSISLQLSHD) lie on the Cytoplasmic side of the membrane.

The protein belongs to the caveolin family. Monomer or homodimer. Interacts with CAV1; the interaction forms a stable heterooligomeric complex that is required for targeting to lipid rafts and for caveolae formation. Tyrosine phosphorylated forms do not form heterooligomers with the Tyr-19-phosphorylated form existing as a monomer or dimer, and the Tyr-27-form as a monomer only. Interacts (tyrosine phosphorylated form) with the SH2 domain-containing proteins, RASA1, NCK1 and SRC. Interacts (tyrosine phosphorylated form) with INSR, the interaction (Tyr-27-phosphorylated form) is increased on insulin stimulation. Interacts (Tyr-19 phosphorylated form) with MAPK1 (phosphorylated form); the interaction, promoted by insulin, leads to nuclear location and MAPK1 activation. Interacts with STAT3; the interaction is increased on insulin-induced tyrosine phosphorylation leading to STAT activation. In terms of processing, phosphorylated on serine and tyrosine residues. Phosphorylation on Ser-36 appears to modulate mitosis in endothelial cells. Phosphorylation on both Tyr-19 and Tyr-27 is required for insulin-induced 'Ser-727' phosphorylation of STAT3 and its activation. Phosphorylation on Tyr-19 is required for insulin-induced phosphorylation of MAPK1 and DNA binding of STAT3. Tyrosine phosphorylation is induced by both EGF and insulin.

It is found in the nucleus. It localises to the cytoplasm. The protein localises to the golgi apparatus membrane. Its subcellular location is the cell membrane. The protein resides in the membrane. It is found in the caveola. Its function is as follows. May act as a scaffolding protein within caveolar membranes. Interacts directly with G-protein alpha subunits and can functionally regulate their activity. Acts as an accessory protein in conjunction with CAV1 in targeting to lipid rafts and driving caveolae formation. The Ser-36 phosphorylated form has a role in modulating mitosis in endothelial cells. Positive regulator of cellular mitogenesis of the MAPK signaling pathway. Required for the insulin-stimulated nuclear translocation and activation of MAPK1 and STAT3, and the subsequent regulation of cell cycle progression. The protein is Caveolin-2 (CAV2) of Eulemur macaco macaco (Black lemur).